A 390-amino-acid chain; its full sequence is Probable NADH-dependent butanol dehydrogenase 2 (390 aa).

Belongs to the iron-containing alcohol dehydrogenase family.

The protein operates within alcohol metabolism; butanol biosynthesis. The protein is Probable NADH-dependent butanol dehydrogenase 2 (yugK) of Bacillus subtilis (strain 168).